Reading from the N-terminus, the 623-residue chain is Xaa-Pro aminopeptidase 1 (623 aa).

R77 provides a ligand contact to a peptide. Position 304 is an N6-acetyllysine (K304). A peptide is bound at residue H395. D415, D426, and H489 together coordinate Mn(2+). Residues H489, H498, and E523 each contribute to the a peptide site. Mn(2+) is bound by residues E523 and E537.

This sequence belongs to the peptidase M24B family. In terms of assembly, homodimer. The cofactor is Mn(2+). As to expression, expressed in all tissues tested, including pancreas, heart, muscle, kidney, liver, lung and brain. Highest levels in pancreas.

It localises to the cytoplasm. Its subcellular location is the cytosol. The enzyme catalyses Release of any N-terminal amino acid, including proline, that is linked to proline, even from a dipeptide or tripeptide.. Its activity is regulated as follows. Inhibited by apstatin and the metal ion chelators EDTA and 1,10-phenanthroline. Partially inhibited by dithiothreitol. Not inhibited by enalaprilat or amastatin. Specifically inhibited by the pseudodipeptide CQ31. Inhibition by CQ31 indirectly activates the CARD8 inflammasome: dipeptide accumulation following PEPD inactivation weaky inhibit dipeptidyl peptidases DDP8 and DPP9, relieving DPP8- and/or DPP9-mediated inhibition of CARD8. Its function is as follows. Metalloaminopeptidase that catalyzes the removal of a penultimate prolyl residue from the N-termini of peptides, such as Arg-Pro-Pro. Contributes to the degradation of bradykinin. This chain is Xaa-Pro aminopeptidase 1, found in Homo sapiens (Human).